Reading from the N-terminus, the 496-residue chain is MWQIVFFTLSCDLVLAAAYNNFRKSMDSIGKKQYQVQHGSCSYTFLLPEMDNCRSSSSPYVSNAVQRDAPLEYDDSVQRLQVLENIMENNTQWLMKLENYIQDNMKKEMVEIQQNAVQNQTAVMIEIGTNLLNQTAEQTRKLTDVEAQVLNQTTRLELQLLEHSLSTNKLEKQILDQTSEINKLQDKNSFLEKKVLAMEDKHIIQLQSIKEEKDQLQVLVSKQNSIIEELEKKIVTATVNNSVLQKQQHDLMETVNNLLTMMSTSNSAKDPTVAKEEQISFRDCAEVFKSGHTTNGIYTLTFPNSTEEIKAYCDMEAGGGGWTIIQRREDGSVDFQRTWKEYKVGFGNPSGEYWLGNEFVSQLTNQQRYVLKIHLKDWEGNEAYSLYEHFYLSSEELNYRIHLKGLTGTAGKISSISQPGNDFSTKDGDNDKCICKCSQMLTGGWWFDACGPSNLNGMYYPQRQNTNKFNGIKWYYWKGSGYSLKATTMMIRPADF.

The N-terminal stretch at 1 to 18 (MWQIVFFTLSCDLVLAAA) is a signal peptide. Asparagine 89, asparagine 119, asparagine 133, asparagine 151, asparagine 240, and asparagine 304 each carry an N-linked (GlcNAc...) asparagine glycan. Residues 166 to 248 (STNKLEKQIL…VNNSVLQKQQ (83 aa)) adopt a coiled-coil conformation. The 221-residue stretch at 275–495 (KEEQISFRDC…ATTMMIRPAD (221 aa)) folds into the Fibrinogen C-terminal domain. A disulfide bridge links cysteine 284 with cysteine 313. Residues aspartate 429, aspartate 431, cysteine 433, and cysteine 435 each coordinate Ca(2+). 2 disulfides stabilise this stretch: cysteine 433/cysteine 435 and cysteine 437/cysteine 450.

In terms of assembly, interacts with TEK/TIE2, competing for the same binding site as ANGPT1. Interacts with ITGA5. Interacts with SVEP1/polydom. Interacts with THBD; this interaction significantly inhibits the generation of activated PC and TAFIa/CPB2 by the thrombin/thrombomodulin complex.

The protein resides in the secreted. Functionally, binds to TEK/TIE2, competing for the ANGPT1 binding site, and modulating ANGPT1 signaling. Can induce tyrosine phosphorylation of TEK/TIE2 in the absence of ANGPT1. In the absence of angiogenic inducers, such as VEGF, ANGPT2-mediated loosening of cell-matrix contacts may induce endothelial cell apoptosis with consequent vascular regression. In concert with VEGF, it may facilitate endothelial cell migration and proliferation, thus serving as a permissive angiogenic signal. Involved in the regulation of lymphangiogenesis. This Homo sapiens (Human) protein is Angiopoietin-2 (ANGPT2).